The following is a 281-amino-acid chain: DegV domain-containing protein CPE2509 (281 aa).

The DegV domain maps to 4 to 279 (IAIITDSSCD…PGMVGVSIQK (276 aa)). The hexadecanoate site is built by threonine 60 and serine 93.

May bind long-chain fatty acids, such as palmitate, and may play a role in lipid transport or fatty acid metabolism. This chain is DegV domain-containing protein CPE2509, found in Clostridium perfringens (strain 13 / Type A).